The primary structure comprises 860 residues: uncharacterized protein (860 aa).

2 stretches are compositionally biased toward basic and acidic residues: residues 334 to 345 and 536 to 551; these read LEKKSLQSDSKN and EDQK…LSDK. Disordered stretches follow at residues 334 to 360, 530 to 551, 708 to 798, and 813 to 842; these read LEKK…LRKE, EEDD…LSDK, ARKT…EDEF, and PFNE…RKAI. Acidic residues-rich tracts occupy residues 716 to 725, 738 to 750, and 813 to 824; these read DEEGEIDEDE, EMDE…DSEE, and PFNETDDEEEIQ. A phosphoserine mark is found at S744 and S748.

Belongs to the CBF/MAK21 family.

This is an uncharacterized protein from Schizosaccharomyces pombe (strain 972 / ATCC 24843) (Fission yeast).